The sequence spans 94 residues: MNIKPLNDRVAVKYLEEEEKTRSGIVLPDTAKEEKPQQGEIVAVGKGCTPEDGDPEVKVGDLVVFDKYSGTKVTIDGEDYIILNLEDVLAVIEK.

Belongs to the GroES chaperonin family. In terms of assembly, heptamer of 7 subunits arranged in a ring. Interacts with the chaperonin GroEL.

The protein resides in the cytoplasm. Its function is as follows. Together with the chaperonin GroEL, plays an essential role in assisting protein folding. The GroEL-GroES system forms a nano-cage that allows encapsulation of the non-native substrate proteins and provides a physical environment optimized to promote and accelerate protein folding. GroES binds to the apical surface of the GroEL ring, thereby capping the opening of the GroEL channel. In Halothermothrix orenii (strain H 168 / OCM 544 / DSM 9562), this protein is Co-chaperonin GroES.